The following is a 509-amino-acid chain: Ankyrin repeat domain-containing protein 13C (509 aa).

Positions 1–19 are enriched in basic and acidic residues; sequence MTGEKIRSLHRDQKPSKDE. Residues 1-42 form a disordered region; it reads MTGEKIRSLHRDQKPSKDEDLLEPDEEATAGGTFTRTGKLKN. ANK repeat units follow at residues 79–110, 111–140, and 144–173; these read DAYFPVHECVFKGDIRRLSSLIRSHSIGQKDN, HGNTPLHLAVMLGNKECAHLLLAHNAPVKV, and QGWSPLAEAISYGDRQMITALLRKLKQQSR.

The protein resides in the endoplasmic reticulum membrane. Its function is as follows. Acts as a molecular chaperone for G protein-coupled receptors, regulating their biogenesis and exit from the ER. The chain is Ankyrin repeat domain-containing protein 13C (ankrd13c) from Xenopus tropicalis (Western clawed frog).